Reading from the N-terminus, the 86-residue chain is ATP synthase epsilon chain (86 aa).

The protein belongs to the ATPase epsilon chain family. As to quaternary structure, F-type ATPases have 2 components, CF(1) - the catalytic core - and CF(0) - the membrane proton channel. CF(1) has five subunits: alpha(3), beta(3), gamma(1), delta(1), epsilon(1). CF(0) has three main subunits: a, b and c.

Its subcellular location is the cell inner membrane. Functionally, produces ATP from ADP in the presence of a proton gradient across the membrane. The chain is ATP synthase epsilon chain (atpC) from Caulobacter vibrioides (strain ATCC 19089 / CIP 103742 / CB 15) (Caulobacter crescentus).